Here is a 496-residue protein sequence, read N- to C-terminus: Glycerol kinase (496 aa).

Threonine 11 contacts ADP. ATP-binding residues include threonine 11, threonine 12, and serine 13. Threonine 11 provides a ligand contact to sn-glycerol 3-phosphate. Residue arginine 15 coordinates ADP. Sn-glycerol 3-phosphate contacts are provided by arginine 81, glutamate 82, tyrosine 133, and aspartate 242. 5 residues coordinate glycerol: arginine 81, glutamate 82, tyrosine 133, aspartate 242, and glutamine 243. Residues threonine 264 and glycine 307 each contribute to the ADP site. Residues threonine 264, glycine 307, and glutamine 311 each contribute to the ATP site. Asparagine 413 is an ADP binding site.

The protein belongs to the FGGY kinase family.

The catalysed reaction is glycerol + ATP = sn-glycerol 3-phosphate + ADP + H(+). The protein operates within polyol metabolism; glycerol degradation via glycerol kinase pathway; sn-glycerol 3-phosphate from glycerol: step 1/1. Its activity is regulated as follows. Inhibited by fructose 1,6-bisphosphate (FBP). Key enzyme in the regulation of glycerol uptake and metabolism. Catalyzes the phosphorylation of glycerol to yield sn-glycerol 3-phosphate. The protein is Glycerol kinase of Borrelia duttonii (strain Ly).